Consider the following 496-residue polypeptide: Gamma-aminobutyric acid receptor subunit beta-like (496 aa).

A signal peptide (or 27) is located at residues Met-1–Ala-20. The Extracellular segment spans residues Gln-21 to Tyr-258. Asn-39 and Asn-189 each carry an N-linked (GlcNAc...) asparagine glycan. Cys-176 and Cys-190 are oxidised to a cystine. 3 helical membrane-spanning segments follow: residues Phe-259–Ile-280, Thr-285–Val-306, and Ala-318–Tyr-342. At Thr-343–Lys-472 the chain is on the cytoplasmic side. Residues Tyr-473 to Ile-494 traverse the membrane as a helical segment.

This sequence belongs to the ligand-gated ion channel (TC 1.A.9) family. Gamma-aminobutyric acid receptor (TC 1.A.9.5) subfamily. Generally pentameric. There are five types of GABA(A) receptor chains: alpha, beta, gamma, delta, and rho. Interacts with Grd (alpha chain).

The protein resides in the postsynaptic cell membrane. Its subcellular location is the cell membrane. Functionally, GABA, an inhibitory neurotransmitter, mediates neuronal inhibition by binding to the GABA receptor and opening an integral chloride channel. Combines with the ligand-gated ion channel subunit GRD to form cation-selective GABA-gated ion channels when coexpressed in Xenopus laevis oocytes. This is Gamma-aminobutyric acid receptor subunit beta-like (Lcch3) from Drosophila melanogaster (Fruit fly).